The chain runs to 252 residues: Pyrroloquinoline-quinone synthase (252 aa).

Belongs to the PqqC family.

It catalyses the reaction 6-(2-amino-2-carboxyethyl)-7,8-dioxo-1,2,3,4,7,8-hexahydroquinoline-2,4-dicarboxylate + 3 O2 = pyrroloquinoline quinone + 2 H2O2 + 2 H2O + H(+). It functions in the pathway cofactor biosynthesis; pyrroloquinoline quinone biosynthesis. Ring cyclization and eight-electron oxidation of 3a-(2-amino-2-carboxyethyl)-4,5-dioxo-4,5,6,7,8,9-hexahydroquinoline-7,9-dicarboxylic-acid to PQQ. This Acinetobacter baumannii (strain AB307-0294) protein is Pyrroloquinoline-quinone synthase.